A 130-amino-acid chain; its full sequence is MSLMDPLANALNHLTNCERVGKKVFYIKPASKLIGRVLKVMQDHGYIGEFEFIEDGRAGIFKVELIGKINKCGAIKPRYAVKKHEFEKFEKRYLPARDFGLLIVSTSQGIMTHYEAKEKGIGGRLISYVY.

It belongs to the universal ribosomal protein uS8 family. As to quaternary structure, part of the 30S ribosomal subunit.

In terms of biological role, one of the primary rRNA binding proteins, it binds directly to 16S rRNA central domain where it helps coordinate assembly of the platform of the 30S subunit. This chain is Small ribosomal subunit protein uS8, found in Methanotorris igneus (Methanococcus igneus).